Consider the following 179-residue polypeptide: Guanosine-3',5'-bis(diphosphate) 3'-pyrophosphohydrolase MESH1 (179 aa).

N-acetylglycine is present on Gly-2. Lys-25 is subject to N6-acetyllysine. The HD domain maps to 32-127; it reads YINHPIGVAR…VKLADKLYNL (96 aa). 3 residues coordinate Mn(2+): His-35, His-61, and Asp-62. Residues Glu-65 and Asp-66 each act as nucleophile in the active site. Lys-97 bears the N6-acetyllysine mark. Residue Asp-122 coordinates Mn(2+). Lys-123 is subject to N6-acetyllysine.

The protein belongs to the MESH1 family. It depends on Mn(2+) as a cofactor.

The enzyme catalyses guanosine 3',5'-bis(diphosphate) + H2O = GDP + diphosphate + H(+). In terms of biological role, ppGpp hydrolyzing enzyme involved in starvation response. The sequence is that of Guanosine-3',5'-bis(diphosphate) 3'-pyrophosphohydrolase MESH1 (Hddc3) from Mus musculus (Mouse).